Here is a 432-residue protein sequence, read N- to C-terminus: Serine--tRNA ligase (432 aa).

Residue 235 to 237 participates in L-serine binding; that stretch reads TSE. 266–268 is a binding site for ATP; sequence RSE. Glutamate 289 lines the L-serine pocket. Residue 353–356 coordinates ATP; the sequence is EISS. Serine 388 is an L-serine binding site.

Belongs to the class-II aminoacyl-tRNA synthetase family. Type-1 seryl-tRNA synthetase subfamily. In terms of assembly, homodimer. The tRNA molecule binds across the dimer.

The protein localises to the cytoplasm. The enzyme catalyses tRNA(Ser) + L-serine + ATP = L-seryl-tRNA(Ser) + AMP + diphosphate + H(+). The catalysed reaction is tRNA(Sec) + L-serine + ATP = L-seryl-tRNA(Sec) + AMP + diphosphate + H(+). The protein operates within aminoacyl-tRNA biosynthesis; selenocysteinyl-tRNA(Sec) biosynthesis; L-seryl-tRNA(Sec) from L-serine and tRNA(Sec): step 1/1. Functionally, catalyzes the attachment of serine to tRNA(Ser). Is also able to aminoacylate tRNA(Sec) with serine, to form the misacylated tRNA L-seryl-tRNA(Sec), which will be further converted into selenocysteinyl-tRNA(Sec). This is Serine--tRNA ligase from Paraburkholderia phymatum (strain DSM 17167 / CIP 108236 / LMG 21445 / STM815) (Burkholderia phymatum).